Here is a 355-residue protein sequence, read N- to C-terminus: Peptide chain release factor 1 (355 aa).

Gln231 is modified (N5-methylglutamine). A compositionally biased stretch (basic and acidic residues) spans 283 to 292 (IAKETSERKS). The segment at 283–303 (IAKETSERKSQVGTGDRSGRI) is disordered.

This sequence belongs to the prokaryotic/mitochondrial release factor family. Methylated by PrmC. Methylation increases the termination efficiency of RF1.

The protein resides in the cytoplasm. Functionally, peptide chain release factor 1 directs the termination of translation in response to the peptide chain termination codons UAG and UAA. In Campylobacter curvus (strain 525.92), this protein is Peptide chain release factor 1.